Reading from the N-terminus, the 370-residue chain is Gap junction delta-4 protein (370 aa).

Residues 1–19 (MEGVDLLGFLIITLNCNVT) lie on the Cytoplasmic side of the membrane. Residues 20–40 (MVGKLWFVLTMLLRMLVIVLA) form a helical membrane-spanning segment. The Extracellular portion of the chain corresponds to 41–76 (GRPVYQDEQERFVCNTLQPGCANVCYDVFSPVSHLR). Residues 77 to 97 (FWLIQGVCVLLPSAVFSVYVL) traverse the membrane as a helical segment. The Cytoplasmic segment spans residues 98-146 (HRGATLAALGPRRCPDPREPASGQRRCPRPFGERGGLQVPDFSAGYIIH). Residues 147–167 (LLLRTLLEAAFGALHYFLFGF) form a helical membrane-spanning segment. At 168-196 (LAPKKFPCTRPPCTGVVDCYVSRPTEKSL) the chain is on the extracellular side. The chain crosses the membrane as a helical span at residues 197-217 (LMLFLWAVSALSFLLGLADLV). Topologically, residues 218 to 370 (CSLRRRMRRR…HLRARKSEWV (153 aa)) are cytoplasmic. Residues 224–370 (MRRRPGPPTS…HLRARKSEWV (147 aa)) are disordered. Positions 246-260 (AEGRRTDEEGGREEE) are enriched in basic and acidic residues. Residues 331 to 346 (PSAAPSRLAAPPSCSS) show a composition bias toward low complexity.

It belongs to the connexin family. Delta-type subfamily. A connexon is composed of a hexamer of connexins. In terms of tissue distribution, expressed in pancreas, kidney, skeletal muscle, liver, placenta, and heart.

The protein resides in the cell membrane. It localises to the cell junction. Its subcellular location is the gap junction. In terms of biological role, one gap junction consists of a cluster of closely packed pairs of transmembrane channels, the connexons, through which materials of low MW diffuse from one cell to a neighboring cell. The polypeptide is Gap junction delta-4 protein (GJD4) (Homo sapiens (Human)).